A 127-amino-acid chain; its full sequence is MTKDKRYAFSVKVETAFVPDQSDVEQNRYVFTYTVHIENTGNVAAQLISRHWIITDATGKTQEVRGLGVIGQQPLLQPGERFQYTSGTMLNTPVGEMRGFYHITAEDGTQFDSEIAPFQLNMPRVLH.

Residues 3–127 (KDKRYAFSVK…FQLNMPRVLH (125 aa)) enclose the ApaG domain.

This is Protein ApaG from Methylobacillus flagellatus (strain ATCC 51484 / DSM 6875 / VKM B-1610 / KT).